An 805-amino-acid polypeptide reads, in one-letter code: MAVAALALLALLPQALGQHNSSYVDYNVEANPDLFPQCLDTISLSFPDCQSGPLSKNLVCDSTASPYDRAAALVSLFTLEELIANTGNTSPGVPRLGLPPYQVWSEALHGLGRANFTDNGALHAGRPSFPSPILSAAAFNRTLINQIASIISTQGRAFNNAGRFGLDVYSPNINTFRHPVWGRGQETPGEDAYTLTAAYAYEYITGIQGGVNPEHLKLAATAKHFAGYDIENWDNHSRLGNDVNITQQDLAEYYTPQFLVAARDAHVHSFMCSYNAVNGVPSCSNTFFLQTLLRDTFSFVDHGYVSGDCGAVYGVFNPHGYAANEPSAAADAILAGTDIDCGTSYQYHFNESITTGAVARDDIERGFIRLYANLVELGYFDGNSSSSNPYRSLGWPDVQKTDAWNISYEAAVEGIVLLKNDGTLPLASPSEGKNKSIALIGPWANATTQLQGNYYGDAPYLISPVDAFTAAGYTVHYAPGTEISTNSTANFSAALSAARAADTIVFLGGIDNTIEAEAQDRSSIAWPGNQLELISQLAAQKSDDQPLVVYQMGGGQVDSSSLKFNAKVNALLWGGYPGQSGGLALRDILTGARAPAGRLTTTQYPAAYAESFSALDMNLRPNETTQNPGQTYMWYTGEPVYAFGHGLFYTTFNASSAQAAKTKYTFNITDLTSAAHPDTTTVGQRTLFNFTASITNSGQRDSDYTALVYANTSTAGPSPYPNKWLVGFDRLAAVAKEGGTAELNVPVAVDRLARVDEAGNTVLFPGRYEVALNNEREVVVEVELVGEQVVLLKWPEEVQGVAGDE.

Positions 1 to 17 (MAVAALALLALLPQALG) are cleaved as a signal peptide. Residues Asn-20, Asn-115, Asn-140, Asn-235, and Asn-244 are each glycosylated (N-linked (GlcNAc...) asparagine). Asp-308 is a catalytic residue. Asn-350, Asn-383, Asn-405, Asn-434, Asn-445, Asn-486, Asn-490, Asn-622, Asn-653, Asn-667, Asn-689, and Asn-711 each carry an N-linked (GlcNAc...) asparagine glycan.

Belongs to the glycosyl hydrolase 3 family.

Its subcellular location is the secreted. The catalysed reaction is Hydrolysis of (1-&gt;4)-beta-D-xylans, to remove successive D-xylose residues from the non-reducing termini.. It functions in the pathway glycan degradation; xylan degradation. In terms of biological role, xylan 1,4-beta-xylosidase involved in the hydrolysis of xylan, a major structural heterogeneous polysaccharide found in plant biomass representing the second most abundant polysaccharide in the biosphere, after cellulose. In Aspergillus aculeatus, this protein is Probable exo-1,4-beta-xylosidase xlnD (xlnD).